The primary structure comprises 290 residues: Phosphate import ATP-binding protein PstB (290 aa).

Residues 25–285 (LEARNLDFYY…PKTRRARDYL (261 aa)) enclose the ABC transporter domain. Position 57 to 64 (57 to 64 (GPSGCGKS)) interacts with ATP.

This sequence belongs to the ABC transporter superfamily. Phosphate importer (TC 3.A.1.7) family. As to quaternary structure, the complex is composed of two ATP-binding proteins (PstB), two transmembrane proteins (PstC and PstA) and a solute-binding protein (PstS).

It is found in the cell inner membrane. The enzyme catalyses phosphate(out) + ATP + H2O = ADP + 2 phosphate(in) + H(+). Its function is as follows. Part of the ABC transporter complex PstSACB involved in phosphate import. Responsible for energy coupling to the transport system. In Zymomonas mobilis subsp. mobilis (strain ATCC 31821 / ZM4 / CP4), this protein is Phosphate import ATP-binding protein PstB.